The chain runs to 478 residues: Growth/differentiation factor 10 (478 aa).

The N-terminal stretch at 1 to 33 (MARGPARTSLGPGSQQLPLLSLLLLLLLRDADG) is a signal peptide. Residues 34-70 (SHTAAARPPPPAAADGLAGDKNPQRSPGDVAAAQSPG) form a disordered region. A propeptide spanning residues 34–368 (SHTAAARPPP…EKTMQKARKK (335 aa)) is cleaved from the precursor. N-linked (GlcNAc...) asparagine glycans are attached at residues Asn118, Asn155, and Asn280. Positions 267-345 (PFQAGDPEPG…GRKDRRKKGQ (79 aa)) are disordered. The span at 291–301 (TQATGPLQNNE) shows a compositional bias: polar residues. The segment covering 331–343 (LKPRPGRKDRRKK) has biased composition (basic residues). Cystine bridges form between Cys376/Cys443, Cys405/Cys475, and Cys409/Cys477. The N-linked (GlcNAc...) asparagine glycan is linked to Asn469.

This sequence belongs to the TGF-beta family. Homodimer or heterodimer. Can form a non-covalent complex of the mature region and the pro-region.

The protein resides in the secreted. Functionally, growth factor involved in osteogenesis and adipogenesis. Plays an inhibitory role in the process of osteoblast differentiation via SMAD2/3 pathway. Plays an inhibitory role in the process of adipogenesis. The polypeptide is Growth/differentiation factor 10 (GDF10) (Bos taurus (Bovine)).